Reading from the N-terminus, the 432-residue chain is Gamma-glutamyl phosphate reductase (432 aa).

Belongs to the gamma-glutamyl phosphate reductase family.

It localises to the cytoplasm. The enzyme catalyses L-glutamate 5-semialdehyde + phosphate + NADP(+) = L-glutamyl 5-phosphate + NADPH + H(+). It participates in amino-acid biosynthesis; L-proline biosynthesis; L-glutamate 5-semialdehyde from L-glutamate: step 2/2. Its function is as follows. Catalyzes the NADPH-dependent reduction of L-glutamate 5-phosphate into L-glutamate 5-semialdehyde and phosphate. The product spontaneously undergoes cyclization to form 1-pyrroline-5-carboxylate. This chain is Gamma-glutamyl phosphate reductase, found in Deinococcus radiodurans (strain ATCC 13939 / DSM 20539 / JCM 16871 / CCUG 27074 / LMG 4051 / NBRC 15346 / NCIMB 9279 / VKM B-1422 / R1).